We begin with the raw amino-acid sequence, 282 residues long: tRNA pseudouridine synthase B (282 aa).

Catalysis depends on Asp39, which acts as the Nucleophile.

It belongs to the pseudouridine synthase TruB family. Type 1 subfamily.

The enzyme catalyses uridine(55) in tRNA = pseudouridine(55) in tRNA. Its function is as follows. Responsible for synthesis of pseudouridine from uracil-55 in the psi GC loop of transfer RNAs. This is tRNA pseudouridine synthase B from Borreliella afzelii (strain PKo) (Borrelia afzelii).